The following is a 412-amino-acid chain: Multifunctional CCA protein (412 aa).

Positions 8 and 11 each coordinate ATP. 2 residues coordinate CTP: Gly-8 and Arg-11. Residues Asp-21 and Asp-23 each coordinate Mg(2+). ATP-binding residues include Arg-91, Arg-137, and Arg-140. Positions 91, 137, and 140 each coordinate CTP. The HD domain occupies Thr-228–Trp-329.

It belongs to the tRNA nucleotidyltransferase/poly(A) polymerase family. Bacterial CCA-adding enzyme type 1 subfamily. As to quaternary structure, monomer. Can also form homodimers and oligomers. The cofactor is Mg(2+). Ni(2+) is required as a cofactor.

The catalysed reaction is a tRNA precursor + 2 CTP + ATP = a tRNA with a 3' CCA end + 3 diphosphate. It carries out the reaction a tRNA with a 3' CCA end + 2 CTP + ATP = a tRNA with a 3' CCACCA end + 3 diphosphate. In terms of biological role, catalyzes the addition and repair of the essential 3'-terminal CCA sequence in tRNAs without using a nucleic acid template. Adds these three nucleotides in the order of C, C, and A to the tRNA nucleotide-73, using CTP and ATP as substrates and producing inorganic pyrophosphate. tRNA 3'-terminal CCA addition is required both for tRNA processing and repair. Also involved in tRNA surveillance by mediating tandem CCA addition to generate a CCACCA at the 3' terminus of unstable tRNAs. While stable tRNAs receive only 3'-terminal CCA, unstable tRNAs are marked with CCACCA and rapidly degraded. The polypeptide is Multifunctional CCA protein (Shigella flexneri).